The chain runs to 226 residues: ATP synthase subunit a (226 aa).

The next 5 helical transmembrane spans lie at phenylalanine 17–alanine 37, leucine 78–phenylalanine 98, asparagine 104–isoleucine 124, leucine 175–leucine 195, and phenylalanine 201–leucine 221.

The protein belongs to the ATPase A chain family. As to quaternary structure, F-type ATPases have 2 components, CF(1) - the catalytic core - and CF(0) - the membrane proton channel. CF(1) has five subunits: alpha(3), beta(3), gamma(1), delta(1), epsilon(1). CF(0) has three main subunits: a(1), b(2) and c(9-12). The alpha and beta chains form an alternating ring which encloses part of the gamma chain. CF(1) is attached to CF(0) by a central stalk formed by the gamma and epsilon chains, while a peripheral stalk is formed by the delta and b chains.

The protein localises to the cell inner membrane. Its function is as follows. Key component of the proton channel; it plays a direct role in the translocation of protons across the membrane. The sequence is that of ATP synthase subunit a from Nitratiruptor sp. (strain SB155-2).